A 318-amino-acid chain; its full sequence is Methionyl-tRNA formyltransferase (318 aa).

Residue 110–113 coordinates (6S)-5,6,7,8-tetrahydrofolate; the sequence is SLLP.

This sequence belongs to the Fmt family.

It carries out the reaction L-methionyl-tRNA(fMet) + (6R)-10-formyltetrahydrofolate = N-formyl-L-methionyl-tRNA(fMet) + (6S)-5,6,7,8-tetrahydrofolate + H(+). Its function is as follows. Attaches a formyl group to the free amino group of methionyl-tRNA(fMet). The formyl group appears to play a dual role in the initiator identity of N-formylmethionyl-tRNA by promoting its recognition by IF2 and preventing the misappropriation of this tRNA by the elongation apparatus. This chain is Methionyl-tRNA formyltransferase, found in Lacticaseibacillus casei (strain BL23) (Lactobacillus casei).